Here is a 110-residue protein sequence, read N- to C-terminus: NADH-quinone oxidoreductase subunit K (110 aa).

Transmembrane regions (helical) follow at residues 13–33, 38–58, and 70–90; these read VTHG…GIII, ILIL…NFLI, and VFVF…LAIV.

This sequence belongs to the complex I subunit 4L family. As to quaternary structure, NDH-1 is composed of 14 different subunits. Subunits NuoA, H, J, K, L, M, N constitute the membrane sector of the complex.

The protein localises to the cell inner membrane. It carries out the reaction a quinone + NADH + 5 H(+)(in) = a quinol + NAD(+) + 4 H(+)(out). Its function is as follows. NDH-1 shuttles electrons from NADH, via FMN and iron-sulfur (Fe-S) centers, to quinones in the respiratory chain. The immediate electron acceptor for the enzyme in this species is believed to be ubiquinone. Couples the redox reaction to proton translocation (for every two electrons transferred, four hydrogen ions are translocated across the cytoplasmic membrane), and thus conserves the redox energy in a proton gradient. This chain is NADH-quinone oxidoreductase subunit K, found in Francisella tularensis subsp. holarctica (strain FTNF002-00 / FTA).